Here is a 293-residue protein sequence, read N- to C-terminus: Lysosomal amino acid transporter 1 homolog (293 aa).

The Lumenal segment spans residues 1–37 (MVWRTLGASNFSTCPNGSVQWIWDVFGECAQDGWDEA). 2 N-linked (GlcNAc...) asparagine glycosylation sites follow: asparagine 10 and asparagine 16. The region spanning 34–100 (WDEASVGLGL…LADQLPLQTY (67 aa)) is the PQ-loop 1 domain. A helical membrane pass occupies residues 38 to 58 (SVGLGLVSILCFAASTFPQYI). Topologically, residues 59–71 (KACKTGNMDQALS) are cytoplasmic. Residues 72–92 (LWFLLGWIGGDSCNLIGSFLA) form a helical membrane-spanning segment. The Lumenal portion of the chain corresponds to 93-96 (DQLP). A helical transmembrane segment spans residues 97-117 (LQTYTAVYYVLADLMMLTLYF). Residues 118-127 (HYKFKKRPSP) lie on the Cytoplasmic side of the membrane. A helical transmembrane segment spans residues 128 to 148 (LSAPINSVLLFILGTVCITPL). The Lumenal segment spans residues 149–182 (LSSTDPVAVPREGFRGRTLLSVEPGNKPFTKKEV). Residues 183–203 (IGFVIGSASSLLYLLSRLPQI) traverse the membrane as a helical segment. One can recognise a PQ-loop 2 domain in the interval 191 to 243 (SSLLYLLSRLPQIRTNFIRQSTQGISYSLFALVMLGNTLYGLSVLLKNPEVGQ). The Cytoplasmic segment spans residues 204–214 (RTNFIRQSTQG). Residues 215-235 (ISYSLFALVMLGNTLYGLSVL) traverse the membrane as a helical segment. At 236–254 (LKNPEVGQSEGSYLLHHLP) the chain is on the lumenal side. A helical transmembrane segment spans residues 255–275 (WLVGSLGVLLLDTIISIQFLV). At 276–293 (YRSHETAAASEREPLLPS) the chain is on the cytoplasmic side. The short motif at 290–291 (LL) is the Di-leucine motif element.

Belongs to the laat-1 family. In terms of tissue distribution, ubiquitously expressed.

The protein localises to the lysosome membrane. In terms of biological role, amino acid transporter that specifically mediates the pH-dependent export of the cationic amino acids arginine, histidine and lysine from lysosomes. The protein is Lysosomal amino acid transporter 1 homolog of Mus musculus (Mouse).